The following is a 423-amino-acid chain: ATP-citrate synthase alpha chain protein 2 (423 aa).

Asn-343, Thr-345, and Arg-376 together coordinate citrate.

Belongs to the succinate/malate CoA ligase beta subunit family. In terms of assembly, heterooctamer of 4 alpha and 4 beta chains.

The protein localises to the cytoplasm. Its subcellular location is the cytosol. It catalyses the reaction oxaloacetate + acetyl-CoA + ADP + phosphate = citrate + ATP + CoA. ATP citrate-lyase is the primary enzyme responsible for the synthesis of cytosolic acetyl-CoA, used for the elongation of fatty acids and biosynthesis of isoprenoids, flavonoids and malonated derivatives. May supply substrate to the cytosolic acetyl-CoA carboxylase, which generates the malonyl-CoA used for the synthesis of a multitude of compounds, including very long chain fatty acids and flavonoids. Required for normal growth and development and elongation of C18 fatty acids to C20 to C24 fatty acids in seeds. In contrast to all known animal ACL enzymes having a homomeric structure, plant ACLs are composed of alpha and beta chains. The chain is ATP-citrate synthase alpha chain protein 2 (ACLA-2) from Arabidopsis thaliana (Mouse-ear cress).